Reading from the N-terminus, the 1412-residue chain is MPN domain-containing protein CG4751 (1412 aa).

Positions 1–10 (MENGVEHGVD) are enriched in basic and acidic residues. The disordered stretch occupies residues 1 to 123 (MENGVEHGVD…TKENYEGFNG (123 aa)). 2 stretches are compositionally biased toward acidic residues: residues 23–35 (GEGD…EVEG) and 103–114 (SDAGDEDNDDET). The RAMA domain maps to 113-219 (ETKENYEGFN…AYKNTYLRKC (107 aa)). An MPN domain is found at 284–420 (ITVNSSALLL…LESVVKCIWI (137 aa)). Residues H361, H363, and D374 each contribute to the Zn(2+) site. 7 disordered regions span residues 554–589 (INPP…QKAS), 669–734 (SALN…DIAR), 853–891 (GGSG…NSYK), 1027–1066 (SIPP…QQQQ), 1271–1318 (MKPP…NSGG), 1330–1376 (SSVP…SGGV), and 1389–1412 (LAAP…LSHD). Positions 572–600 (SGRKAEEESNAQAEQKASELKVMSLQEQL) form a coiled coil. Phosphoserine is present on residues S699, S701, S705, S719, S723, and S728. Residues 702–720 (PAKSDTSSHASTSRTRNSP) are compositionally biased toward polar residues. Composition is skewed to low complexity over residues 873–891 (KSSS…NSYK) and 1036–1066 (SSGS…QQQQ). Residues 1275-1290 (KSTTPSSARTRESSAS) show a composition bias toward polar residues. 2 positions are modified to phosphoserine: S1288 and S1290. A Phosphothreonine modification is found at T1297. Residues 1360–1370 (LYGELAPPGAL) are compositionally biased toward low complexity.

Belongs to the peptidase M67 family.

Probable protease. The protein is MPN domain-containing protein CG4751 of Drosophila melanogaster (Fruit fly).